Here is a 247-residue protein sequence, read N- to C-terminus: Probable transcriptional regulatory protein GAU_0635 (247 aa).

Belongs to the TACO1 family.

It is found in the cytoplasm. The chain is Probable transcriptional regulatory protein GAU_0635 from Gemmatimonas aurantiaca (strain DSM 14586 / JCM 11422 / NBRC 100505 / T-27).